We begin with the raw amino-acid sequence, 439 residues long: Ornithine aminotransferase, mitochondrial (439 aa).

A mitochondrion-targeting transit peptide spans 1–25 (MLSKLARLQTVAGLGLGVHSSVASA). An N6-acetyllysine mark is found at Lys-49 and Lys-66. The residue at position 102 (Lys-102) is an N6-succinyllysine. At Lys-107 the chain carries N6-acetyllysine; alternate. The residue at position 107 (Lys-107) is an N6-succinyllysine; alternate. Residue Lys-292 is modified to N6-(pyridoxal phosphate)lysine. At Lys-362 the chain carries N6-acetyllysine; alternate. Residue Lys-362 is modified to N6-succinyllysine; alternate. Residues Lys-386 and Lys-392 each carry the N6-acetyllysine modification. Lys-405 bears the N6-acetyllysine; alternate mark. Lys-405 is subject to N6-succinyllysine; alternate. The residue at position 421 (Lys-421) is an N6-acetyllysine.

Belongs to the class-III pyridoxal-phosphate-dependent aminotransferase family. As to quaternary structure, homohexamer. Pyridoxal 5'-phosphate is required as a cofactor.

Its subcellular location is the mitochondrion matrix. The catalysed reaction is L-ornithine + 2-oxoglutarate = L-glutamate 5-semialdehyde + L-glutamate. The protein operates within amino-acid biosynthesis; L-proline biosynthesis; L-glutamate 5-semialdehyde from L-ornithine: step 1/1. Functionally, catalyzes the reversible interconversion of L-ornithine and 2-oxoglutarate to L-glutamate semialdehyde and L-glutamate. This Bos taurus (Bovine) protein is Ornithine aminotransferase, mitochondrial (OAT).